We begin with the raw amino-acid sequence, 241 residues long: Peptidoglycan endopeptidase RipB (241 aa).

Residues 1–31 (MRHTRFHPIKLAWITAVVAGLMVGVATPADA) form the signal peptide. The region spanning 109–241 (RQAVEYVIRR…TPFVTRIIEY (133 aa)) is the NlpC/P60 domain. The active-site Nucleophile is C152. The active-site Proton acceptor is H201. The active site involves E213.

Belongs to the peptidase C40 family. In terms of assembly, monomer.

In terms of biological role, peptidoglycan endopeptidase that cleaves the bond between D-glutamate and meso-diaminopimelate. Binds high-molecular weight peptidoglycan, but does not degrade it. Required for normal separation of daughter cells after cell division and cell wall integrity. Required for host cell invasion. In Mycobacterium tuberculosis (strain CDC 1551 / Oshkosh), this protein is Peptidoglycan endopeptidase RipB (ripB).